The following is a 193-amino-acid chain: Orotate phosphoribosyltransferase (193 aa).

5-phospho-alpha-D-ribose 1-diphosphate is bound at residue 114-122 (EDVITTGGS). T118 and R146 together coordinate orotate.

Belongs to the purine/pyrimidine phosphoribosyltransferase family. PyrE subfamily. Homodimer. Mg(2+) serves as cofactor.

The catalysed reaction is orotidine 5'-phosphate + diphosphate = orotate + 5-phospho-alpha-D-ribose 1-diphosphate. It participates in pyrimidine metabolism; UMP biosynthesis via de novo pathway; UMP from orotate: step 1/2. Catalyzes the transfer of a ribosyl phosphate group from 5-phosphoribose 1-diphosphate to orotate, leading to the formation of orotidine monophosphate (OMP). The polypeptide is Orotate phosphoribosyltransferase (Chlorobaculum parvum (strain DSM 263 / NCIMB 8327) (Chlorobium vibrioforme subsp. thiosulfatophilum)).